Here is a 182-residue protein sequence, read N- to C-terminus: uncharacterized protein (182 aa).

A helical membrane pass occupies residues 17–34; sequence LSLVLFAVLSVLPLGGCA. TPR repeat units follow at residues 89-122 and 123-156; these read VDAAIRLTKALVAQKRPHEALQVLDNVLVVTPDN and LRALNAKAVILDIEGRHDAAQELYRQALETNPEN.

It is found in the membrane. This is an uncharacterized protein from Sinorhizobium fredii (strain NBRC 101917 / NGR234).